A 379-amino-acid polypeptide reads, in one-letter code: Stimulator of interferon genes protein (379 aa).

3 consecutive transmembrane segments (helical) span residues 20–40 (VAAF…GEPS), 87–107 (ACLG…YFYV), and 115–135 (LPLT…ILLG). 2 S-palmitoyl cysteine lipidation sites follow: Cys88 and Cys91. Residues 153 to 340 (FNVAHGLAWS…KHLRQEEREE (188 aa)) are cyclic dinucleotide-binding domain (CBD). 2',3'-cGAMP-binding residues include Ser162, Tyr167, Arg238, and Thr263. 3',3'-c-di-GMP contacts are provided by residues Ser162, Tyr167, 238-241 (RVYT), and Thr263. The 2',3'-cUAMP site is built by Tyr167, Arg238, and Thr263. The tract at residues 340–379 (EVTMGTAGTFVAPGSSTLHQEPELLISGMDQPLPLRTDIF) is C-terminal tail (CTT). Ser355 is subject to Phosphoserine. Phosphothreonine is present on Thr356. A pLxIS motif motif is present at residues 363 to 366 (LLIS). Ser366 bears the Phosphoserine; by TBK1 mark.

Belongs to the STING family. In terms of assembly, homodimer; forms a homodimer in absence of cyclic nucleotide (c-di-GMP or cGAMP). Homotetramer; in presence of cyclic nucleotide (c-di-GMP or cGAMP), forms tetramers and higher-order oligomers through side-by-side packing. Interacts (when phosphorylated) with IRF3; following activation and phosphorylation on the pLxIS motif by TBK1, recruits IRF3. Interacts with TBK1; when homodimer, leading to subsequent production of IFN-beta. Interacts (via transmembrane domain) with TMEM203. In terms of processing, phosphorylation by TBK1 leads to activation and production of IFN-beta. Following cyclic nucleotide (c-di-GMP or cGAMP)-binding, activation and translocation from the endoplasmic reticulum, STING1 is phosphorylated by TBK1 at Ser-366 in the pLxIS motif. The phosphorylated pLxIS motif constitutes an IRF3-binding motif, leading to recruitment of the transcription factor IRF3 to induce type-I interferons and other cytokines. In contrast, lacks phosphorylation site at position 358, leading to reduced production of type-I interferons and other cytokines.

It is found in the endoplasmic reticulum membrane. The protein localises to the cytoplasm. The protein resides in the perinuclear region. It localises to the endoplasmic reticulum-Golgi intermediate compartment membrane. Its subcellular location is the golgi apparatus membrane. It is found in the cytoplasmic vesicle. The protein localises to the autophagosome membrane. The protein resides in the mitochondrion outer membrane. It localises to the cell membrane. It catalyses the reaction H(+)(in) = H(+)(out). Functionally, facilitator of innate immune signaling that acts as a sensor of cytosolic DNA from bacteria and viruses and promotes low production of type I interferon (IFN-alpha and IFN-beta). Compared to other mammals, STING1-dependent type I interferon induction is strongly reduced in bats, suggesting that the cGAS-STING pathway promotes a limited inflammatory response. Innate immune response is triggered in response to non-CpG double-stranded DNA from viruses and bacteria delivered to the cytoplasm. Acts by binding cyclic dinucleotides: recognizes and binds cyclic di-GMP (c-di-GMP), a second messenger produced by bacteria, cyclic UMP-AMP (2',3'-cUAMP), and cyclic GMP-AMP (cGAMP), a messenger produced by CGAS in response to DNA virus in the cytosol. Upon binding to c-di-GMP, cUAMP or cGAMP, STING1 oligomerizes, translocates from the endoplasmic reticulum and is phosphorylated by TBK1 on the pLxIS motif, leading to recruitment and subsequent activation of the transcription factor IRF3 to induce expression of type I interferon and exert a potent anti-viral state. In addition to promote the production of type I interferons, plays a direct role in autophagy. Following cGAMP-binding, STING1 buds from the endoplasmic reticulum into COPII vesicles, which then form the endoplasmic reticulum-Golgi intermediate compartment (ERGIC). The ERGIC serves as the membrane source for WIPI2 recruitment and LC3 lipidation, leading to formation of autophagosomes that target cytosolic DNA or DNA viruses for degradation by the lysosome. Promotes autophagy by acting as a proton channel that directs proton efflux from the Golgi to facilitate MAP1LC3B/LC3B lipidation. The autophagy- and interferon-inducing activities can be uncoupled and autophagy induction is independent of TBK1 phosphorylation. The protein is Stimulator of interferon genes protein of Eidolon helvum (Straw-colored fruit bat).